We begin with the raw amino-acid sequence, 88 residues long: uncharacterized protein (88 aa).

Residues 1–24 (MLPRSCKDFYETLRTAVLCGQACA) form the signal peptide.

To Rhizobium NGR234A y4oL.

This is an uncharacterized protein from Sinorhizobium fredii (strain NBRC 101917 / NGR234).